We begin with the raw amino-acid sequence, 87 residues long: Probable Fe(2+)-trafficking protein (87 aa).

It belongs to the Fe(2+)-trafficking protein family.

In terms of biological role, could be a mediator in iron transactions between iron acquisition and iron-requiring processes, such as synthesis and/or repair of Fe-S clusters in biosynthetic enzymes. The protein is Probable Fe(2+)-trafficking protein of Francisella tularensis subsp. mediasiatica (strain FSC147).